Reading from the N-terminus, the 1212-residue chain is DNA topoisomerase 1 (1212 aa).

Positions 1 to 114 (MKLVVVESPA…DVERVTFNAI (114 aa)) constitute a Toprim domain. Positions 7 and 80 each coordinate Mg(2+). The region spanning 130-556 (DNDLINAYLA…AFWHDFKPKT (427 aa)) is the Topo IA-type catalytic domain. The tract at residues 164–169 (SAGRVQ) is interaction with DNA. Residue Y293 is the O-(5'-phospho-DNA)-tyrosine intermediate of the active site. The C4-type zinc finger occupies 592-619 (CPSCHTGRLALKGGRFGAFIACSNYPEC). Disordered regions lie at residues 687 to 742 (GKGN…GVST), 758 to 937 (ALAG…KARA), and 1107 to 1212 (RAKM…EVAE). 2 stretches are compositionally biased toward polar residues: residues 708 to 742 (ASST…GVST) and 770 to 782 (VSDN…SSTI). A compositionally biased stretch (basic and acidic residues) spans 815–840 (ADNRLLSHRNGDIDSRAIPADHKDSS). 2 stretches are compositionally biased toward polar residues: residues 881 to 890 (AITSDNSPSD) and 897 to 906 (STPSSATSSV). Basic and acidic residues predominate over residues 921-934 (KADEQAKEEEESRK). Residues 1109 to 1140 (KMPKKKKTKKAAAKKPAAKKTTTKKAAPKKAT) show a composition bias toward basic residues. Positions 1141 to 1151 (TKTATPKSATT) are enriched in low complexity. A compositionally biased stretch (basic residues) spans 1167–1182 (PAKKAVAKKTTAKKPA). The span at 1183 to 1199 (SKSATKKAPSSKTTAAK) shows a compositional bias: low complexity.

This sequence belongs to the type IA topoisomerase family. As to quaternary structure, monomer. Requires Mg(2+) as cofactor.

It carries out the reaction ATP-independent breakage of single-stranded DNA, followed by passage and rejoining.. Its function is as follows. Releases the supercoiling and torsional tension of DNA, which is introduced during the DNA replication and transcription, by transiently cleaving and rejoining one strand of the DNA duplex. Introduces a single-strand break via transesterification at a target site in duplex DNA. The scissile phosphodiester is attacked by the catalytic tyrosine of the enzyme, resulting in the formation of a DNA-(5'-phosphotyrosyl)-enzyme intermediate and the expulsion of a 3'-OH DNA strand. The free DNA strand then undergoes passage around the unbroken strand, thus removing DNA supercoils. Finally, in the religation step, the DNA 3'-OH attacks the covalent intermediate to expel the active-site tyrosine and restore the DNA phosphodiester backbone. The polypeptide is DNA topoisomerase 1 (Zymomonas mobilis subsp. mobilis (strain ATCC 31821 / ZM4 / CP4)).